The primary structure comprises 185 residues: MFRQSIRPLVSNRLTFIRYNSSPAYTAAVSLLKGDLKKAMIAKDEMKKTAIRSMLSAIKNKEIALKGKSADEYSLYDMYSKLISQRKDSINEFLANKRDDLVAKEQGEMDIIKKYMDQLPVSSELDIDQNVKKLLDALKTKAGEKKVQIKEIMGEIDWKSLPTEWKTSPTAIKNSIVKQFKEIFK.

A mitochondrion-targeting transit peptide spans 1-20 (MFRQSIRPLVSNRLTFIRYN).

It belongs to the AIM41 family.

It localises to the mitochondrion. This chain is Altered inheritance of mitochondria protein 41, mitochondrial (AIM41), found in Saccharomyces cerevisiae (strain YJM789) (Baker's yeast).